The following is a 438-amino-acid chain: 5-methylthioadenosine/S-adenosylhomocysteine deaminase (438 aa).

Zn(2+) contacts are provided by histidine 71 and histidine 73. Substrate contacts are provided by glutamate 100 and histidine 192. Histidine 219 is a binding site for Zn(2+). Substrate is bound by residues glutamate 222 and aspartate 307. Aspartate 307 contributes to the Zn(2+) binding site.

It belongs to the metallo-dependent hydrolases superfamily. MTA/SAH deaminase family. Zn(2+) serves as cofactor.

The catalysed reaction is S-adenosyl-L-homocysteine + H2O + H(+) = S-inosyl-L-homocysteine + NH4(+). It carries out the reaction S-methyl-5'-thioadenosine + H2O + H(+) = S-methyl-5'-thioinosine + NH4(+). Functionally, catalyzes the deamination of 5-methylthioadenosine and S-adenosyl-L-homocysteine into 5-methylthioinosine and S-inosyl-L-homocysteine, respectively. Is also able to deaminate adenosine. The sequence is that of 5-methylthioadenosine/S-adenosylhomocysteine deaminase from Syntrophobacter fumaroxidans (strain DSM 10017 / MPOB).